The chain runs to 57 residues: MKTIIVLLLLTIVAAAVVESSPKARRQTECQIKNDCQRYCQSVKECKYGKCYCNYAG.

An N-terminal signal peptide occupies residues 1-26 (MKTIIVLLLLTIVAAAVVESSPKARR). 3 disulfides stabilise this stretch: Cys30–Cys46, Cys36–Cys51, and Cys40–Cys53.

The protein belongs to the short scorpion toxin superfamily. Potassium channel inhibitor family. Alpha-KTx 17 subfamily. Expressed by the venom gland.

Its subcellular location is the secreted. Its function is as follows. Inhibits voltage-gated potassium channels. The chain is Potassium channel toxin alpha-KTx 17.2 from Lychas mucronatus (Chinese swimming scorpion).